The sequence spans 994 residues: Protein HIR2 (994 aa).

WD repeat units follow at residues 10–49 (LHSG…QLTT), 70–110 (AHED…HELI), 118–157 (DGTS…YQEL), 164–203 (EKLT…TTRN), 220–263 (SMNV…NNIL), 276–319 (QYNP…PIFI), and 323–364 (ISKK…NTVS). Disordered stretches follow at residues 413–445 (VHEA…SPLK) and 482–550 (AMST…TSNL). The segment covering 414 to 426 (HEAKAKKPTEGIK) has biased composition (basic and acidic residues). The span at 482–492 (AMSTTRSTKSQ) shows a compositional bias: polar residues. Positions 495–509 (NPKEKPTKVTPEKAK) are enriched in basic and acidic residues. Over residues 525–545 (SSMNENSSNNSVKKSNTSESN) the composition is skewed to low complexity.

Belongs to the WD repeat HIR1 family.

It is found in the nucleus. Its function is as follows. Required for replication-independent chromatin assembly and for the periodic repression of histone gene transcription during the cell cycle. This Debaryomyces hansenii (strain ATCC 36239 / CBS 767 / BCRC 21394 / JCM 1990 / NBRC 0083 / IGC 2968) (Yeast) protein is Protein HIR2 (HIR2).